The sequence spans 184 residues: GTP cyclohydrolase 1 (184 aa).

C74, H77, and C145 together coordinate Zn(2+).

This sequence belongs to the GTP cyclohydrolase I family. Toroid-shaped homodecamer, composed of two pentamers of five dimers.

It carries out the reaction GTP + H2O = 7,8-dihydroneopterin 3'-triphosphate + formate + H(+). It participates in cofactor biosynthesis; 7,8-dihydroneopterin triphosphate biosynthesis; 7,8-dihydroneopterin triphosphate from GTP: step 1/1. The chain is GTP cyclohydrolase 1 (folE) from Aquifex aeolicus (strain VF5).